A 63-amino-acid polypeptide reads, in one-letter code: Small ribosomal subunit protein eS17 (63 aa).

Belongs to the eukaryotic ribosomal protein eS17 family.

In Haloarcula marismortui (strain ATCC 43049 / DSM 3752 / JCM 8966 / VKM B-1809) (Halobacterium marismortui), this protein is Small ribosomal subunit protein eS17 (rps17e).